Reading from the N-terminus, the 344-residue chain is Ion-translocating oxidoreductase complex subunit D (344 aa).

The next 4 membrane-spanning stretches (helical) occupy residues 23 to 43, 44 to 64, 80 to 100, and 120 to 140; these read LVLG…GAGT, LLNL…MLAL, VTAL…LTLV, and PFNP…LEMT. Residue Thr172 is modified to FMN phosphoryl threonine. 5 consecutive transmembrane segments (helical) span residues 198-218, 222-242, 252-272, 285-305, and 306-326; these read LGGA…LFLL, LFTW…SLLF, GSPL…FIVT, LLFG…GGYP, and DGVA…DYYT.

This sequence belongs to the NqrB/RnfD family. The complex is composed of six subunits: RnfA, RnfB, RnfC, RnfD, RnfE and RnfG. The cofactor is FMN.

The protein localises to the cell inner membrane. Part of a membrane-bound complex that couples electron transfer with translocation of ions across the membrane. This is Ion-translocating oxidoreductase complex subunit D from Pseudomonas paraeruginosa (strain DSM 24068 / PA7) (Pseudomonas aeruginosa (strain PA7)).